The sequence spans 418 residues: Cell division protein FtsZ (418 aa).

GTP is bound by residues 27–31 (GGGSN), 114–116 (GTG), glutamate 145, lysine 149, and aspartate 193. The tract at residues 386 to 418 (KNGVKGHTFGVPLPSVNEDLDEPTFLRNRNKGL) is disordered.

Belongs to the FtsZ family. As to quaternary structure, homodimer. Polymerizes to form a dynamic ring structure in a strictly GTP-dependent manner. Interacts directly with several other division proteins.

The protein resides in the cytoplasm. Essential cell division protein that forms a contractile ring structure (Z ring) at the future cell division site. The regulation of the ring assembly controls the timing and the location of cell division. One of the functions of the FtsZ ring is to recruit other cell division proteins to the septum to produce a new cell wall between the dividing cells. Binds GTP and shows GTPase activity. The protein is Cell division protein FtsZ of Treponema pallidum (strain Nichols).